Here is a 244-residue protein sequence, read N- to C-terminus: Glutathione S-transferase theta-2 (244 aa).

The GST N-terminal domain maps to 2 to 82; it reads GLELFLDLVS…YLSCKYQTPD (81 aa). Residues 40-41, 53-54, 66-67, and 104-107 each bind glutathione; these read HK, KL, ES, and DCIR. A GST C-terminal domain is found at 88 to 224; that stretch reads DLQARARVHE…SILEQAAKKT (137 aa).

This sequence belongs to the GST superfamily. Theta family. In terms of assembly, homodimer. As to expression, expressed at low levels in liver. In lung, expressed at low levels in ciliated bronchiolar cells, alveolar macrophages and alveolar type II cells.

Its subcellular location is the cytoplasm. The protein localises to the cytosol. The protein resides in the nucleus. It catalyses the reaction RX + glutathione = an S-substituted glutathione + a halide anion + H(+). Its function is as follows. Conjugation of reduced glutathione to a wide number of exogenous and endogenous hydrophobic electrophiles. Has a sulfatase activity. This Homo sapiens (Human) protein is Glutathione S-transferase theta-2 (GSTT2).